The sequence spans 731 residues: 1,4-alpha-glucan branching enzyme GlgB (731 aa).

Catalysis depends on Asp411, which acts as the Nucleophile. Glu464 functions as the Proton donor in the catalytic mechanism.

The protein belongs to the glycosyl hydrolase 13 family. GlgB subfamily. Monomer.

It catalyses the reaction Transfers a segment of a (1-&gt;4)-alpha-D-glucan chain to a primary hydroxy group in a similar glucan chain.. It participates in glycan biosynthesis; glycogen biosynthesis. Its function is as follows. Catalyzes the formation of the alpha-1,6-glucosidic linkages in glycogen by scission of a 1,4-alpha-linked oligosaccharide from growing alpha-1,4-glucan chains and the subsequent attachment of the oligosaccharide to the alpha-1,6 position. This Mycobacterium ulcerans (strain Agy99) protein is 1,4-alpha-glucan branching enzyme GlgB.